The primary structure comprises 148 residues: Large ribosomal subunit protein bL9 (148 aa).

Belongs to the bacterial ribosomal protein bL9 family.

Its function is as follows. Binds to the 23S rRNA. The sequence is that of Large ribosomal subunit protein bL9 from Pseudomonas putida (strain GB-1).